The sequence spans 341 residues: L-threonine 3-dehydrogenase (341 aa).

Cysteine 38 contacts Zn(2+). Active-site charge relay system residues include threonine 40 and histidine 43. Zn(2+)-binding residues include histidine 63, glutamate 64, cysteine 93, cysteine 96, cysteine 99, and cysteine 107. Residues isoleucine 175, aspartate 195, arginine 200, leucine 262–isoleucine 264, and isoleucine 286–tyrosine 287 each bind NAD(+).

Belongs to the zinc-containing alcohol dehydrogenase family. As to quaternary structure, homotetramer. Zn(2+) serves as cofactor.

It is found in the cytoplasm. It catalyses the reaction L-threonine + NAD(+) = (2S)-2-amino-3-oxobutanoate + NADH + H(+). The protein operates within amino-acid degradation; L-threonine degradation via oxydo-reductase pathway; glycine from L-threonine: step 1/2. Its function is as follows. Catalyzes the NAD(+)-dependent oxidation of L-threonine to 2-amino-3-ketobutyrate. This Shigella dysenteriae serotype 1 (strain Sd197) protein is L-threonine 3-dehydrogenase.